We begin with the raw amino-acid sequence, 255 residues long: 4-diphosphocytidyl-2-C-methyl-D-erythritol kinase (255 aa).

Lys-6 is an active-site residue. Residue 95-105 (PVCAGLGGGSS) participates in ATP binding. The active site involves Asp-137.

This sequence belongs to the GHMP kinase family. IspE subfamily.

The enzyme catalyses 4-CDP-2-C-methyl-D-erythritol + ATP = 4-CDP-2-C-methyl-D-erythritol 2-phosphate + ADP + H(+). The protein operates within isoprenoid biosynthesis; isopentenyl diphosphate biosynthesis via DXP pathway; isopentenyl diphosphate from 1-deoxy-D-xylulose 5-phosphate: step 3/6. Catalyzes the phosphorylation of the position 2 hydroxy group of 4-diphosphocytidyl-2C-methyl-D-erythritol. The chain is 4-diphosphocytidyl-2-C-methyl-D-erythritol kinase from Campylobacter jejuni subsp. jejuni serotype O:6 (strain 81116 / NCTC 11828).